A 318-amino-acid chain; its full sequence is Carnitine monooxygenase reductase subunit (318 aa).

Positions 5-107 constitute an FAD-binding FR-type domain; sequence YEMFPAVVTR…SEPKNLFPLA (103 aa). Positions 233–318 constitute a 2Fe-2S ferredoxin-type domain; it reads FTVVLAKSNQ…AKGKKLVLDL (86 aa). [2Fe-2S] cluster is bound by residues Cys-267, Cys-272, Cys-275, and Cys-305.

The protein belongs to the PDR/VanB family. CntB subfamily. As to quaternary structure, composed of an oxygenase subunit (cntA) and a reductase subunit (cntB). FMN serves as cofactor. The cofactor is [2Fe-2S] cluster.

The enzyme catalyses (R)-carnitine + NADH + O2 + H(+) = (3R)-3-hydroxy-4-oxobutanoate + trimethylamine + NAD(+) + H2O. It catalyses the reaction (R)-carnitine + NADPH + O2 + H(+) = (3R)-3-hydroxy-4-oxobutanoate + trimethylamine + NADP(+) + H2O. It participates in amine and polyamine metabolism; carnitine metabolism. Functionally, converts carnitine to trimethylamine and malic semialdehyde. In Acinetobacter baumannii (strain ATCC 19606 / DSM 30007 / JCM 6841 / CCUG 19606 / CIP 70.34 / NBRC 109757 / NCIMB 12457 / NCTC 12156 / 81), this protein is Carnitine monooxygenase reductase subunit.